A 72-amino-acid polypeptide reads, in one-letter code: Large ribosomal subunit protein uL29 (72 aa).

The protein belongs to the universal ribosomal protein uL29 family.

The sequence is that of Large ribosomal subunit protein uL29 (rpmC) from Chlamydia pneumoniae (Chlamydophila pneumoniae).